Here is a 448-residue protein sequence, read N- to C-terminus: Ribosomal protein uS12 methylthiotransferase RimO (448 aa).

The region spanning 13 to 128 (KSFFITTLGC…AGEILRKNFP (116 aa)) is the MTTase N-terminal domain. Cys22, Cys58, Cys91, Cys167, Cys171, and Cys174 together coordinate [4Fe-4S] cluster. Residues 153–382 (NYSKPYSYVK…AYLGTLKTIH (230 aa)) enclose the Radical SAM core domain. In terms of domain architecture, TRAM spans 383-448 (QNRIGKIYPC…ELDMSGTWVD (66 aa)).

Belongs to the methylthiotransferase family. RimO subfamily. The cofactor is [4Fe-4S] cluster.

The protein resides in the cytoplasm. It catalyses the reaction L-aspartate(89)-[ribosomal protein uS12]-hydrogen + (sulfur carrier)-SH + AH2 + 2 S-adenosyl-L-methionine = 3-methylsulfanyl-L-aspartate(89)-[ribosomal protein uS12]-hydrogen + (sulfur carrier)-H + 5'-deoxyadenosine + L-methionine + A + S-adenosyl-L-homocysteine + 2 H(+). Functionally, catalyzes the methylthiolation of an aspartic acid residue of ribosomal protein uS12. The chain is Ribosomal protein uS12 methylthiotransferase RimO from Leptospira biflexa serovar Patoc (strain Patoc 1 / Ames).